Here is a 131-residue protein sequence, read N- to C-terminus: Squamosa promoter-binding-like protein 3 (131 aa).

Positions 1-17 (MSMRRSKAEGKRSLREL) are enriched in basic and acidic residues. The segment at 1–54 (MSMRRSKAEGKRSLRELSEEEEEEEETEDEDTFEEEEALEKKQKGKATSSSGVC) is disordered. Residues 18–38 (SEEEEEEEETEDEDTFEEEEA) are compositionally biased toward acidic residues. Positions 45–129 (GKATSSSGVC…GHNERRRKST (85 aa)) are sufficient and necessary for DNA binding. The segment at 51–128 (SGVCQVESCT…AGHNERRRKS (78 aa)) adopts an SBP-type zinc-finger fold. Residues cysteine 54, cysteine 59, cysteine 76, histidine 79, cysteine 95, cysteine 98, histidine 102, and cysteine 114 each coordinate Zn(2+). A Bipartite nuclear localization signal motif is present at residues 111–127 (KRSCRRRLAGHNERRRK).

It depends on Zn(2+) as a cofactor. As to expression, expressed in vegetative and inflorescence apical meristems, floral meristems, leaf and flower organ primordia, inflorescence stem tissue and to lower extent in roots.

It is found in the nucleus. The protein localises to the cytoplasm. Functionally, trans-acting factor that binds specifically to the consensus nucleotide sequence 5'-TNCGTACAA-3' of AP1 promoter. Binds specifically to the 5'-GTAC-3' core sequence. Promotes both vegetative phase change and flowering. Regulates phase-specific patterns of leaf epidermal differentiation and flowering time, but does not seem to affect leaf shape. The sequence is that of Squamosa promoter-binding-like protein 3 (SPL3) from Arabidopsis thaliana (Mouse-ear cress).